The chain runs to 388 residues: Succinate--CoA ligase [ADP-forming] subunit beta (388 aa).

In terms of domain architecture, ATP-grasp spans 9–244; sequence KGILSGFDVR…PHEYSEEELE (236 aa). Residues K46, 53 to 55, E99, V102, and E107 contribute to the ATP site; that span reads GRG. The Mg(2+) site is built by N199 and D213. Residues N264 and 320–322 contribute to the substrate site; that span reads GIM.

It belongs to the succinate/malate CoA ligase beta subunit family. Heterotetramer of two alpha and two beta subunits. The cofactor is Mg(2+).

It carries out the reaction succinate + ATP + CoA = succinyl-CoA + ADP + phosphate. The enzyme catalyses GTP + succinate + CoA = succinyl-CoA + GDP + phosphate. The protein operates within carbohydrate metabolism; tricarboxylic acid cycle; succinate from succinyl-CoA (ligase route): step 1/1. Its function is as follows. Succinyl-CoA synthetase functions in the citric acid cycle (TCA), coupling the hydrolysis of succinyl-CoA to the synthesis of either ATP or GTP and thus represents the only step of substrate-level phosphorylation in the TCA. The beta subunit provides nucleotide specificity of the enzyme and binds the substrate succinate, while the binding sites for coenzyme A and phosphate are found in the alpha subunit. This chain is Succinate--CoA ligase [ADP-forming] subunit beta, found in Anaplasma phagocytophilum (strain HZ).